Here is a 734-residue protein sequence, read N- to C-terminus: Photosystem I P700 chlorophyll a apoprotein A2 (734 aa).

8 helical membrane passes run 46–69 (IFAS…FHVA), 135–158 (LYTG…LHLQ), 175–199 (LNHH…HVAI), 273–291 (MAHH…GHMY), 330–353 (LHFQ…QHMY), 369–395 (AALY…IFFI), 417–439 (AIIS…LYVH), and 517–535 (FLVH…LILV). [4Fe-4S] cluster is bound by residues Cys-559 and Cys-568. Helical transmembrane passes span 575–596 (AFYL…YWHW) and 643–665 (LSVW…MFLI). His-654, Met-662, and Tyr-670 together coordinate chlorophyll a. Trp-671 contributes to the phylloquinone binding site. Residues 707–727 (LVGLAHFSVGYIFTYAAFLIA) traverse the membrane as a helical segment.

It belongs to the PsaA/PsaB family. In terms of assembly, the PsaA/B heterodimer binds the P700 chlorophyll special pair and subsequent electron acceptors. PSI consists of a core antenna complex that captures photons, and an electron transfer chain that converts photonic excitation into a charge separation. The eukaryotic PSI reaction center is composed of at least 11 subunits. P700 is a chlorophyll a/chlorophyll a' dimer, A0 is one or more chlorophyll a, A1 is one or both phylloquinones and FX is a shared 4Fe-4S iron-sulfur center. serves as cofactor.

The protein localises to the plastid. The protein resides in the chloroplast thylakoid membrane. It catalyses the reaction reduced [plastocyanin] + hnu + oxidized [2Fe-2S]-[ferredoxin] = oxidized [plastocyanin] + reduced [2Fe-2S]-[ferredoxin]. In terms of biological role, psaA and PsaB bind P700, the primary electron donor of photosystem I (PSI), as well as the electron acceptors A0, A1 and FX. PSI is a plastocyanin-ferredoxin oxidoreductase, converting photonic excitation into a charge separation, which transfers an electron from the donor P700 chlorophyll pair to the spectroscopically characterized acceptors A0, A1, FX, FA and FB in turn. Oxidized P700 is reduced on the lumenal side of the thylakoid membrane by plastocyanin. This chain is Photosystem I P700 chlorophyll a apoprotein A2, found in Spinacia oleracea (Spinach).